The chain runs to 787 residues: DNA ligase (787 aa).

NAD(+) contacts are provided by residues 32–36, 81–82, and Glu121; these read DAEYD and SL. Lys123 (N6-AMP-lysine intermediate) is an active-site residue. NAD(+) is bound by residues Arg144, Glu181, Lys297, and Lys321. Residues Cys415, Cys418, Cys445, and Cys451 each contribute to the Zn(2+) site. Residues 703 to 787 enclose the BRCT domain; sequence VEGLPLAGQT…RLTELGVAVD (85 aa).

Belongs to the NAD-dependent DNA ligase family. LigA subfamily. The cofactor is Mg(2+). Mn(2+) serves as cofactor.

The catalysed reaction is NAD(+) + (deoxyribonucleotide)n-3'-hydroxyl + 5'-phospho-(deoxyribonucleotide)m = (deoxyribonucleotide)n+m + AMP + beta-nicotinamide D-nucleotide.. DNA ligase that catalyzes the formation of phosphodiester linkages between 5'-phosphoryl and 3'-hydroxyl groups in double-stranded DNA using NAD as a coenzyme and as the energy source for the reaction. It is essential for DNA replication and repair of damaged DNA. This is DNA ligase from Pseudomonas syringae pv. tomato (strain ATCC BAA-871 / DC3000).